Here is a 151-residue protein sequence, read N- to C-terminus: Transcriptional regulator MraZ (151 aa).

SpoVT-AbrB domains follow at residues 5 to 52 and 81 to 124; these read ANAI…PLSE and AVDL…DEDA.

The protein belongs to the MraZ family. As to quaternary structure, forms oligomers.

Its subcellular location is the cytoplasm. It localises to the nucleoid. This chain is Transcriptional regulator MraZ, found in Pseudomonas savastanoi pv. phaseolicola (strain 1448A / Race 6) (Pseudomonas syringae pv. phaseolicola (strain 1448A / Race 6)).